Here is a 172-residue protein sequence, read N- to C-terminus: Lytic chitin monooxygenase (172 aa).

An N-terminal signal peptide occupies residues 1–30 (MHAGRKTAVLIGAALAPVIAVSLPAASASA). Cu cation contacts are provided by H31 and H106. The region spanning 31-168 (HGYISNPPSR…DNAFYACIDV (138 aa)) is the Chitin-binding type-4 domain.

Cu(2+) is required as a cofactor.

It localises to the secreted. The enzyme catalyses [(1-&gt;4)-N-acetyl-beta-D-glucosaminyl]n+m + reduced acceptor + O2 = [(1-&gt;4)-N-acetyl-beta-D-glucosaminyl]m-1-(1-&gt;4)-2-(acetylamino)-2-deoxy-D-glucono-1,5-lactone + [(1-&gt;4)-N-acetyl-beta-D-glucosaminyl]n + acceptor + H2O.. The protein operates within glycan degradation; chitin degradation. Its function is as follows. Involved in chitin degradation. Catalyzes the oxidative cleavage of glycosidic bonds in chitin via a copper-dependent mechanism, leading to oxidized chitooligomers with degrees of polymerization of 4-6. Is not active on cellulose. This Streptomyces ambofaciens (strain ATCC 23877 / 3486 / DSM 40053 / JCM 4204 / NBRC 12836 / NRRL B-2516) protein is Lytic chitin monooxygenase.